Here is a 590-residue protein sequence, read N- to C-terminus: Leukocyte immunoglobulin-like receptor subfamily B member 5 (590 aa).

The first 23 residues, 1 to 23, serve as a signal peptide directing secretion; sequence MTLTLSVLICLGLSVGPRTCVQA. The Extracellular segment spans residues 24-458; that stretch reads GTLPKPTLWA…PQSGLGRHLG (435 aa). 4 consecutive Ig-like C2-type domains span residues 27–116, 111–228, 224–313, and 337–418; these read PKPT…LELV, DPLE…SLLI, PSLL…DPLD, and GENV…LVVS. A disulfide bond links C49 and C98. A glycan (N-linked (GlcNAc...) asparagine) is linked at N139. Cystine bridges form between C144-C195 and C244-C295. N-linked (GlcNAc...) asparagine glycosylation is found at N279 and N339. The cysteines at positions 344 and 395 are disulfide-linked. A compositionally biased stretch (low complexity) spans 416-433; sequence VVSGPSGDPSLSPTGSTP. Residues 416 to 449 are disordered; it reads VVSGPSGDPSLSPTGSTPTPGPEDQPLTPTGLDP. The chain crosses the membrane as a helical span at residues 459–479; it reads VVTGVSVAFVLLLFLLLFLLL. Over 480–590 the chain is Cytoplasmic; that stretch reads RHRHQSKHRT…PSIYAPLAIH (111 aa). Disordered stretches follow at residues 488–514 and 529–550; these read RTSAHFYRPAGAAGPEPKDQGLQKRAS and KDTQPKDGVEMDAPAAASEAPQ. S514 carries the phosphoserine modification. The short motif at 552-557 is the ITIM motif 1 element; that stretch reads VTYAQL. Basic and acidic residues predominate over residues 562–578; sequence LRREATEPPPSQEREPP. The interval 562-590 is disordered; it reads LRREATEPPPSQEREPPAEPSIYAPLAIH. An ITIM motif 2 motif is present at residues 582 to 587; sequence SIYAPL.

As to expression, detected in a natural killer (NK) cells.

It is found in the membrane. May act as receptor for class I MHC antigens. The polypeptide is Leukocyte immunoglobulin-like receptor subfamily B member 5 (LILRB5) (Homo sapiens (Human)).